A 96-amino-acid polypeptide reads, in one-letter code: Putative pterin-4-alpha-carbinolamine dehydratase (96 aa).

This sequence belongs to the pterin-4-alpha-carbinolamine dehydratase family.

It catalyses the reaction (4aS,6R)-4a-hydroxy-L-erythro-5,6,7,8-tetrahydrobiopterin = (6R)-L-erythro-6,7-dihydrobiopterin + H2O. In Prochlorococcus marinus (strain MIT 9313), this protein is Putative pterin-4-alpha-carbinolamine dehydratase.